The chain runs to 245 residues: tRNA1(Val) (adenine(37)-N6)-methyltransferase (245 aa).

This sequence belongs to the methyltransferase superfamily. tRNA (adenine-N(6)-)-methyltransferase family.

It is found in the cytoplasm. The enzyme catalyses adenosine(37) in tRNA1(Val) + S-adenosyl-L-methionine = N(6)-methyladenosine(37) in tRNA1(Val) + S-adenosyl-L-homocysteine + H(+). In terms of biological role, specifically methylates the adenine in position 37 of tRNA(1)(Val) (anticodon cmo5UAC). The protein is tRNA1(Val) (adenine(37)-N6)-methyltransferase of Salmonella paratyphi C (strain RKS4594).